Here is a 250-residue protein sequence, read N- to C-terminus: Agamous-like MADS-box protein AGL8 homolog (250 aa).

The MADS-box domain occupies 3–57 (RGRVQLKRIENKINRQVTFSKRRSGLLKKAHEISVLCDAEVGLIVFSTKGKLFEY). Positions 88–178 (PGSWTLENAK…SKKVKEREKE (91 aa)) constitute a K-box domain. Disordered stretches follow at residues 162–191 (QEQN…QNHE) and 206–241 (PHLG…TVMP). Basic and acidic residues predominate over residues 171–180 (KVKEREKEVE). Polar residues-rich tracts occupy residues 181–191 (QQNQWDQQNHE) and 226–240 (GNSS…NTVM).

It is found in the nucleus. Functionally, probable transcription factor. The polypeptide is Agamous-like MADS-box protein AGL8 homolog (SCM1) (Solanum commersonii (Commerson's wild potato)).